Consider the following 242-residue polypeptide: Ribosomal RNA large subunit methyltransferase E (242 aa).

S-adenosyl-L-methionine-binding residues include Gly-64, Trp-66, Asp-84, Asp-100, and Asp-125. The Proton acceptor role is filled by Lys-165. A disordered region spans residues Ser-198–Asp-242. The segment covering Gly-233–Asp-242 has biased composition (polar residues).

The protein belongs to the class I-like SAM-binding methyltransferase superfamily. RNA methyltransferase RlmE family.

The protein resides in the cytoplasm. It carries out the reaction uridine(2552) in 23S rRNA + S-adenosyl-L-methionine = 2'-O-methyluridine(2552) in 23S rRNA + S-adenosyl-L-homocysteine + H(+). In terms of biological role, specifically methylates the uridine in position 2552 of 23S rRNA at the 2'-O position of the ribose in the fully assembled 50S ribosomal subunit. The chain is Ribosomal RNA large subunit methyltransferase E from Verminephrobacter eiseniae (strain EF01-2).